Reading from the N-terminus, the 365-residue chain is Sulfate/thiosulfate import ATP-binding protein CysA (365 aa).

An ABC transporter domain is found at 3–237 (IEIANIKKSF…PATRFVLEFM (235 aa)). 35-42 (GPSGSGKT) contacts ATP.

The protein belongs to the ABC transporter superfamily. Sulfate/tungstate importer (TC 3.A.1.6) family. As to quaternary structure, the complex is composed of two ATP-binding proteins (CysA), two transmembrane proteins (CysT and CysW) and a solute-binding protein (CysP).

It localises to the cell inner membrane. The catalysed reaction is sulfate(out) + ATP + H2O = sulfate(in) + ADP + phosphate + H(+). It catalyses the reaction thiosulfate(out) + ATP + H2O = thiosulfate(in) + ADP + phosphate + H(+). Functionally, part of the ABC transporter complex CysAWTP involved in sulfate/thiosulfate import. Responsible for energy coupling to the transport system. This Escherichia coli O157:H7 protein is Sulfate/thiosulfate import ATP-binding protein CysA.